We begin with the raw amino-acid sequence, 280 residues long: Fructose-1,6-bisphosphatase class 1 (280 aa).

Mg(2+) contacts are provided by glutamate 64, aspartate 83, leucine 85, and aspartate 86. Residues 86–89 (DGSS), tyrosine 190, and lysine 221 contribute to the substrate site. Residue glutamate 227 coordinates Mg(2+).

This sequence belongs to the FBPase class 1 family. In terms of assembly, homotetramer. The cofactor is Mg(2+).

The protein localises to the cytoplasm. It catalyses the reaction beta-D-fructose 1,6-bisphosphate + H2O = beta-D-fructose 6-phosphate + phosphate. It participates in carbohydrate biosynthesis; gluconeogenesis. In Campylobacter hominis (strain ATCC BAA-381 / DSM 21671 / CCUG 45161 / LMG 19568 / NCTC 13146 / CH001A), this protein is Fructose-1,6-bisphosphatase class 1.